We begin with the raw amino-acid sequence, 218 residues long: MASFDQMRANVGKLLRGIDRYNPENLATLERYVETQAKENAYDLEANLAVLKLYQFNPAFFQTTVTAQILLKALTNLPHTDFTLCKCMIDQAHQEERPIRQILYLGDLLETCHFQSFWQALDENLDLIDGITGFEDSVRKFICHVVGITYQHIDRWLLAEMLGDLSEPQLRVWMSKYGWMESENGKIFVCNQEENIKPKNIVEKIDFDSVSGIMASSQ.

The PCI domain occupies tyrosine 42 to lysine 204.

It belongs to the eIF-3 subunit K family. As to quaternary structure, component of the eukaryotic translation initiation factor 3 (eIF-3) complex, which is composed of 13 subunits: eif3a, eif3b, eif3c, eif3d, eif3e, eif3f, eif3g, eif3h, eif3i, eif3j, eif3k, eif3l and eif3m.

It localises to the nucleus. Its subcellular location is the cytoplasm. Functionally, component of the eukaryotic translation initiation factor 3 (eIF-3) complex, which is involved in protein synthesis of a specialized repertoire of mRNAs and, together with other initiation factors, stimulates binding of mRNA and methionyl-tRNAi to the 40S ribosome. The eIF-3 complex specifically targets and initiates translation of a subset of mRNAs involved in cell proliferation. This Xenopus tropicalis (Western clawed frog) protein is Eukaryotic translation initiation factor 3 subunit K (eif3k).